Consider the following 334-residue polypeptide: Glyceraldehyde-3-phosphate dehydrogenase 1 (334 aa).

NAD(+) contacts are provided by residues 11–12 (RI), Asp33, Arg77, and Ser119. D-glyceraldehyde 3-phosphate-binding positions include 150–152 (SCT) and Thr181. The Nucleophile role is filled by Cys151. Asn182 is an NAD(+) binding site. Residues Arg196, 209–210 (TG), and Arg232 contribute to the D-glyceraldehyde 3-phosphate site. Asn314 contacts NAD(+).

It belongs to the glyceraldehyde-3-phosphate dehydrogenase family. In terms of assembly, homotetramer.

It is found in the cytoplasm. It carries out the reaction D-glyceraldehyde 3-phosphate + phosphate + NAD(+) = (2R)-3-phospho-glyceroyl phosphate + NADH + H(+). The protein operates within carbohydrate degradation; glycolysis; pyruvate from D-glyceraldehyde 3-phosphate: step 1/5. Functionally, catalyzes the oxidative phosphorylation of glyceraldehyde 3-phosphate (G3P) to 1,3-bisphosphoglycerate (BPG) using the cofactor NAD. The first reaction step involves the formation of a hemiacetal intermediate between G3P and a cysteine residue, and this hemiacetal intermediate is then oxidized to a thioester, with concomitant reduction of NAD to NADH. The reduced NADH is then exchanged with the second NAD, and the thioester is attacked by a nucleophilic inorganic phosphate to produce BPG. In Bacillus cereus, this protein is Glyceraldehyde-3-phosphate dehydrogenase 1 (gap1).